The chain runs to 188 residues: UPF0301 protein XOO1309 (188 aa).

Belongs to the UPF0301 (AlgH) family.

This is UPF0301 protein XOO1309 from Xanthomonas oryzae pv. oryzae (strain MAFF 311018).